The chain runs to 151 residues: Macrodomain Ter protein (151 aa).

It belongs to the MatP family. Homodimer.

The protein resides in the cytoplasm. Its function is as follows. Required for spatial organization of the terminus region of the chromosome (Ter macrodomain) during the cell cycle. Prevents early segregation of duplicated Ter macrodomains during cell division. Binds specifically to matS, which is a 13 bp signature motif repeated within the Ter macrodomain. The protein is Macrodomain Ter protein of Cronobacter sakazakii (strain ATCC BAA-894) (Enterobacter sakazakii).